A 254-amino-acid chain; its full sequence is Thiazole synthase (254 aa).

The active-site Schiff-base intermediate with DXP is Lys-96. 1-deoxy-D-xylulose 5-phosphate is bound by residues Gly-157, 183–184 (AG), and 205–206 (NT).

This sequence belongs to the ThiG family. Homotetramer. Forms heterodimers with either ThiH or ThiS.

The protein resides in the cytoplasm. The catalysed reaction is [ThiS sulfur-carrier protein]-C-terminal-Gly-aminoethanethioate + 2-iminoacetate + 1-deoxy-D-xylulose 5-phosphate = [ThiS sulfur-carrier protein]-C-terminal Gly-Gly + 2-[(2R,5Z)-2-carboxy-4-methylthiazol-5(2H)-ylidene]ethyl phosphate + 2 H2O + H(+). It functions in the pathway cofactor biosynthesis; thiamine diphosphate biosynthesis. Catalyzes the rearrangement of 1-deoxy-D-xylulose 5-phosphate (DXP) to produce the thiazole phosphate moiety of thiamine. Sulfur is provided by the thiocarboxylate moiety of the carrier protein ThiS. In vitro, sulfur can be provided by H(2)S. The chain is Thiazole synthase from Clostridium perfringens (strain 13 / Type A).